Reading from the N-terminus, the 182-residue chain is UPF0397 protein BA_2640/GBAA_2640/BAS2460 (182 aa).

Helical transmembrane passes span 9–29, 40–60, 71–91, 114–134, and 142–162; these read VVAIGIGSALYGILGLWGFSI, AILTVFGALFGPVAGLLIGLI, WSIWWGWVISSGIIGFTMGFI, ITGLIGIVIAIIFAGAFDIIV, and IVIQVLGATIADVIVFLVLGL.

This sequence belongs to the UPF0397 family.

It is found in the cell membrane. The chain is UPF0397 protein BA_2640/GBAA_2640/BAS2460 from Bacillus anthracis.